Consider the following 857-residue polypeptide: Protein argonaute-1 (857 aa).

Residues 227–346 (PVIEFMCEVL…LPLEVCNIVA (120 aa)) enclose the PAZ domain. 2 interaction with guide RNA regions span residues 309 to 314 (YFKQKY) and 522 to 564 (GKTP…LCLK). One can recognise a Piwi domain in the interval 515 to 816 (LIIVILPGKT…VAFRARYHLV (302 aa)). Residues 670 to 675 (PEGQLP) form an impairs access of bound RNA to the active site region. Interaction with guide RNA stretches follow at residues 708–712 (RHHTR), 751–759 (HAGIQGTSR), and 788–813 (YVRCTRSVSIPAPAYYARLVAFRARY).

The protein belongs to the argonaute family. Ago subfamily. As to quaternary structure, interacts with DDB1, DDX5, DDX6, DHX30, DHX36, DDX47, DICER1, AGO2, ELAVL1, HNRNPF, IGF2BP1, ILF3, IMP8, MATR3, MOV10, PABPC1, PRMT5, RBM4, SART3, TNRC6B, UPF1 and YBX1. Associates with polysomes and messenger ribonucleoproteins (mNRPs). Interacts with LIMD1, WTIP and AJUBA. Interacts with APOBEC3F, APOBEC3G and APOBEC3H. Post-translationally, ubiquitinated on surface-exposed lysines by a SCF-like E3 ubiquitin-protein ligase complex containing ZSWIM8 during target-directed microRNA degradation (TDMD), a process that mediates degradation of microRNAs (miRNAs). Ubiquitination by the SCF-like E3 ubiquitin-protein ligase complex containing ZSWIM8 leads to its subsequent degradation, thereby exposing miRNAs for degradation. ZSWIM8 recognizes and binds AGO1 when it is engaged with a TDMD target.

It is found in the cytoplasm. It localises to the P-body. Functionally, required for RNA-mediated gene silencing (RNAi). Binds to short RNAs such as microRNAs (miRNAs) or short interfering RNAs (siRNAs), and represses the translation of mRNAs which are complementary to them. Lacks endonuclease activity and does not appear to cleave target mRNAs. Also required for transcriptional gene silencing (TGS) of promoter regions which are complementary to bound short antigene RNAs (agRNAs). The protein is Protein argonaute-1 (AGO1) of Homo sapiens (Human).